The sequence spans 299 residues: Heat stress transcription factor B-2a (299 aa).

The DNA-binding element occupies 21–115 (PTPFLTKTFN…LLREIQRRKI (95 aa)). A disordered region spans residues 119-157 (HQTVVAPSSEQRNQTMVVSPSNSGEDNNNNQVMSSSPSS). Residues 166-211 (TGNGGLSVELLEENEKLRSQNIQLNRELTQMKSICDNIYSLMSNYV) form a hydrophobic repeat HR-A/B region. The short motif at 261–264 (KRTR) is the Nuclear localization signal element.

The protein belongs to the HSF family. Class B subfamily. Homotrimer. Exhibits temperature-dependent phosphorylation.

It is found in the nucleus. Functionally, transcriptional regulator that specifically binds DNA sequence 5'-AGAAnnTTCT-3' known as heat shock promoter elements (HSE). The sequence is that of Heat stress transcription factor B-2a (HSFB2A) from Arabidopsis thaliana (Mouse-ear cress).